Here is a 343-residue protein sequence, read N- to C-terminus: ELAV-like protein 3 (343 aa).

3 consecutive RRM domains span residues 35–113, 121–202, and 260–338; these read TNLI…YARP, ANLY…FANN, and WCIF…FKTS.

Belongs to the RRM elav family.

Functionally, RNA-binding protein that binds to AU-rich sequences (AREs) of target mRNAs. May also bind poly-A tracts via RRM 3. May be involved in neuronal differentiation and maintenance. The polypeptide is ELAV-like protein 3 (Xenopus tropicalis (Western clawed frog)).